The chain runs to 984 residues: Putative formate dehydrogenase SAV2309 (984 aa).

The region spanning 3–79 (EHLVVTLDGK…PMTVNTVNND (77 aa)) is the 2Fe-2S ferredoxin-type domain. [2Fe-2S] cluster is bound by residues Cys37, Cys48, Cys51, and Cys63. Residues 79-119 (DVKDAQKEALDRILEKHMLYCTVCDYNNGDCEIHNTMDAWG) enclose the 4Fe-4S His(Cys)3-ligated-type domain. His95, Cys99, Cys102, Cys109, Cys147, Cys150, Cys153, Cys157, Cys190, Cys193, Cys196, Cys200, Cys264, Cys267, Cys271, and Cys299 together coordinate [4Fe-4S] cluster. 2 consecutive 4Fe-4S ferredoxin-type domains span residues 138–165 (PFYR…VNET) and 181–211 (NDVP…VNME). The formate dehydrogenase stretch occupies residues 252-984 (MRKERIKKTK…YVFPGNQVDK (733 aa)). Positions 257-313 (IKKTKTVCTYCGVGCSFEVWTKDREILKVQPSHDSPANKIVTCVKGKFSWGHINSDQ) constitute a 4Fe-4S Mo/W bis-MGD-type domain.

This sequence in the C-terminal section; belongs to the prokaryotic molybdopterin-containing oxidoreductase family. It depends on [2Fe-2S] cluster as a cofactor. Requires [4Fe-4S] cluster as cofactor. Mo-bis(molybdopterin guanine dinucleotide) serves as cofactor.

It catalyses the reaction formate + NAD(+) = CO2 + NADH. This chain is Putative formate dehydrogenase SAV2309, found in Staphylococcus aureus (strain Mu50 / ATCC 700699).